The primary structure comprises 739 residues: Eukaryotic translation initiation factor 3 subunit B (739 aa).

One can recognise an RRM domain in the interval 39–125 (AFVVIDGLPV…HTLAVNKLTD (87 aa)). 5 WD repeats span residues 191-229 (RDHW…KQKQ), 231-288 (PHPF…RSFV), 457-498 (SLKD…SFFA), 516-559 (IEKK…EKPE), and 574-612 (NEHF…HTFS).

Belongs to the eIF-3 subunit B family. As to quaternary structure, component of the eukaryotic translation initiation factor 3 (eIF-3) complex.

The protein resides in the cytoplasm. In terms of biological role, RNA-binding component of the eukaryotic translation initiation factor 3 (eIF-3) complex, which is involved in protein synthesis of a specialized repertoire of mRNAs and, together with other initiation factors, stimulates binding of mRNA and methionyl-tRNAi to the 40S ribosome. The eIF-3 complex specifically targets and initiates translation of a subset of mRNAs involved in cell proliferation. This chain is Eukaryotic translation initiation factor 3 subunit B, found in Coccidioides immitis (strain RS) (Valley fever fungus).